Consider the following 363-residue polypeptide: MSHISPIPEILADIKAGKMVIITDAEDRENEGDLLMAAQFVTPEAINFMIKHARGLVCLPMDGEMVEKLGLPMMTQKNGAQYGTNFTVSIEAAHGITTGISAADRALTIQTAVSPTAKPEDIVQPGHIFPLRAQKGGVLVRAGHTEAGVDLAQMNGLIPASVICEIINDDGTMARMPELMKFAEEHKLKIGTIADLIEYRSRTESLLEDMGNAPVQTPWGEFQQHVYVDKLSGETHLALVKGTPAADTETLVRVHEPFSVMDFIQANPRHSWSLPKALEHIQQAESGVVILLHRTEDGASLLDRTLPKGANQAYKWDSKSYGIGAQILAGLNVKKLRVLGQPSSFTGLTGFGLEVVGFEEAEK.

Positions 1–202 (MSHISPIPEI…IADLIEYRSR (202 aa)) are DHBP synthase. D-ribulose 5-phosphate is bound by residues 28 to 29 (RE), D33, 141 to 145 (RAGHT), and E165. Mg(2+) is bound at residue E29. Residue H144 participates in Mg(2+) binding. The interval 205-363 (SLLEDMGNAP…EVVGFEEAEK (159 aa)) is GTP cyclohydrolase II-like.

In the N-terminal section; belongs to the DHBP synthase family. It in the C-terminal section; belongs to the GTP cyclohydrolase II family. It depends on Mg(2+) as a cofactor. The cofactor is Mn(2+).

The enzyme catalyses D-ribulose 5-phosphate = (2S)-2-hydroxy-3-oxobutyl phosphate + formate + H(+). It functions in the pathway cofactor biosynthesis; riboflavin biosynthesis; 2-hydroxy-3-oxobutyl phosphate from D-ribulose 5-phosphate: step 1/1. Catalyzes the conversion of D-ribulose 5-phosphate to formate and 3,4-dihydroxy-2-butanone 4-phosphate. The sequence is that of 3,4-dihydroxy-2-butanone 4-phosphate synthase (ribB) from Neisseria meningitidis serogroup B (strain ATCC BAA-335 / MC58).